The following is a 1012-amino-acid chain: ATP-dependent DNA helicase MPH1 (1012 aa).

The 168-residue stretch at Ile94–Asn261 folds into the Helicase ATP-binding domain. Ile107–Thr114 is a binding site for ATP. The DEAH box signature appears at Asp209–His212. Residues Lys430 to Arg654 form the Helicase C-terminal domain. Residues Asp493–Gln555 are disordered. Residues Arg498 to Arg510 show a composition bias toward basic residues. Residues Leu511–Ser537 show a composition bias toward basic and acidic residues.

The protein belongs to the DEAD box helicase family. DEAH subfamily. FANCM sub-subfamily. In terms of assembly, interacts with the MHF histone-fold complex to form the FANCM-MHF complex.

The protein resides in the nucleus. It catalyses the reaction ATP + H2O = ADP + phosphate + H(+). In terms of biological role, ATP-dependent DNA helicase involved in DNA damage repair by homologous recombination and in genome maintenance. Capable of unwinding D-loops. Plays a role in limiting crossover recombinants during mitotic DNA double-strand break (DSB) repair. Component of a FANCM-MHF complex which promotes gene conversion at blocked replication forks, probably by reversal of the stalled fork. This chain is ATP-dependent DNA helicase MPH1, found in Vanderwaltozyma polyspora (strain ATCC 22028 / DSM 70294 / BCRC 21397 / CBS 2163 / NBRC 10782 / NRRL Y-8283 / UCD 57-17) (Kluyveromyces polysporus).